We begin with the raw amino-acid sequence, 953 residues long: 26S proteasome non-ATPase regulatory subunit 1 (953 aa).

Position 1 is an N-acetylmethionine (M1). T273 is subject to Phosphothreonine. Residues 277 to 319 are disordered; that stretch reads SVPGSTNTGTVPGSEKDSDPMETEEKTASAVAGKTPDASPEPK. A Phosphoserine modification is found at S290. Residues 290 to 303 show a composition bias toward basic and acidic residues; sequence SEKDSDPMETEEKT. K310 carries the N6-acetyllysine modification. Phosphothreonine is present on T311. Residue S315 is modified to Phosphoserine. PC repeat units lie at residues 403 to 436, 441 to 474, 476 to 510, 511 to 545, 547 to 580, 581 to 616, 617 to 649, 651 to 685, 686 to 726, and 729 to 761; these read TATA…PGSA, GGLY…DIVR, GGSL…VTGE, AAGL…EKIL, GLAV…ILRR, SGMY…DVRR, AAVE…PHVR, GAAM…YVRQ, GALI…DVMA, and GAIL…PSVV. At K720 the chain carries N6-acetyllysine. T830 is modified (phosphothreonine). The residue at position 834 (S834) is a Phosphoserine. Disordered regions lie at residues 839-881 and 930-953; these read AKKK…LDNP and AHGP…YIDD. 2 stretches are compositionally biased toward basic and acidic residues: residues 842 to 852 and 859 to 872; these read KEKEKEKKEEE and AEKK…KEPE. Acidic residues predominate over residues 936–953; the sequence is EEEEQEPEPPEPFEYIDD.

This sequence belongs to the proteasome subunit S1 family. In terms of assembly, component of the 19S proteasome regulatory particle complex. The 26S proteasome consists of a 20S core particle (CP) and two 19S regulatory subunits (RP). The regulatory particle is made of a lid composed of 9 subunits, a base containing 6 ATPases and few additional components including PSMD1. Interacts with ADRM1. Interacts with ZFAND1.

Functionally, component of the 26S proteasome, a multiprotein complex involved in the ATP-dependent degradation of ubiquitinated proteins. This complex plays a key role in the maintenance of protein homeostasis by removing misfolded or damaged proteins, which could impair cellular functions, and by removing proteins whose functions are no longer required. Therefore, the proteasome participates in numerous cellular processes, including cell cycle progression, apoptosis, or DNA damage repair. The chain is 26S proteasome non-ATPase regulatory subunit 1 (Psmd1) from Mus musculus (Mouse).